The chain runs to 205 residues: Proteasome subunit beta type-3 (205 aa).

Belongs to the peptidase T1B family. In terms of assembly, the 26S proteasome consists of a 20S proteasome core and two 19S regulatory subunits. The 20S proteasome core is composed of 28 subunits that are arranged in four stacked rings, resulting in a barrel-shaped structure. The two end rings are each formed by seven alpha subunits, and the two central rings are each formed by seven beta subunits. The catalytic chamber with the active sites is on the inside of the barrel.

Its subcellular location is the cytoplasm. The protein localises to the nucleus. Functionally, non-catalytic component of the proteasome, a multicatalytic proteinase complex which is characterized by its ability to cleave peptides with Arg, Phe, Tyr, Leu, and Glu adjacent to the leaving group at neutral or slightly basic pH. The proteasome has an ATP-dependent proteolytic activity. The chain is Proteasome subunit beta type-3 (PSB3) from Trypanosoma brucei brucei.